Here is a 640-residue protein sequence, read N- to C-terminus: Arogenate dehydrogenase 1, chloroplastic (640 aa).

The N-terminal 18 residues, 1–18, are a transit peptide targeting the chloroplast; the sequence is MAETLITKPPLSLSFTSL. Prephenate/arogenate dehydrogenase domains follow at residues 53–334 and 365–640; these read LRIA…GEND and LKIG…LLTS.

It belongs to the prephenate/arogenate dehydrogenase family. Expressed in roots, stems, leaves, flowers, siliques and seeds. More abundant in seeds.

It is found in the plastid. Its subcellular location is the chloroplast. It carries out the reaction L-arogenate + NADP(+) = L-tyrosine + CO2 + NADPH. It participates in amino-acid biosynthesis; L-tyrosine biosynthesis; L-tyrosine from L-arogenate (NADP(+) route): step 1/1. Involved in the biosynthesis of tyrosine. Has no prephenate dehydrogenase activity. This is Arogenate dehydrogenase 1, chloroplastic (TYRAAT1) from Arabidopsis thaliana (Mouse-ear cress).